We begin with the raw amino-acid sequence, 301 residues long: Nucleosome assembly protein 1;3 (301 aa).

Positions 15 to 69 (VETLKNKLQALAEQHVDVLESLAPVVRKRVDVLIEIQSQHDELEAKFLEEKSALE) form a coiled coil. The short motif at 36-51 (LAPVVRKRVDVLIEIQ) is the Nuclear export signal element. The interval 279 to 301 (EDYGASWVDDEEDDDDEYSDEEA) is disordered. Ser-297 is modified (phosphoserine; by CK2).

The protein belongs to the nucleosome assembly protein (NAP) family.

Its subcellular location is the nucleus. It is found in the cytoplasm. Functionally, may modulate chromatin structure by regulation of nucleosome assembly/disassembly. The sequence is that of Nucleosome assembly protein 1;3 (NAP1;3) from Oryza sativa subsp. indica (Rice).